The chain runs to 145 residues: Flagellar assembly factor FliW (145 aa).

Belongs to the FliW family. As to quaternary structure, interacts with translational regulator CsrA and flagellin(s).

Its subcellular location is the cytoplasm. Acts as an anti-CsrA protein, binds CsrA and prevents it from repressing translation of its target genes, one of which is flagellin. Binds to flagellin and participates in the assembly of the flagellum. In Thermosipho africanus (strain TCF52B), this protein is Flagellar assembly factor FliW.